Here is a 425-residue protein sequence, read N- to C-terminus: Probable mannosyltransferase KTR2 (425 aa).

At 1–13 (MQICKVFLTQVKK) the chain is on the cytoplasmic side. A helical; Signal-anchor for type II membrane protein transmembrane segment spans residues 14-33 (LLFVSLLFCLIAQTCWLALV). The stem region stretch occupies residues 34–89 (PYQRQLSLDSYFFRRSREVSSRYDFTRRRHMNQTLKLSSNTYNDEPLNKTKGIKNQ). Residues 34–425 (PYQRQLSLDS…SGKYFLKHDS (392 aa)) are Lumenal-facing. N-linked (GlcNAc...) asparagine glycans are attached at residues N65, N81, N92, and N167. The segment at 90-425 (RENATLLMLV…SGKYFLKHDS (336 aa)) is catalytic. E313 functions as the Nucleophile in the catalytic mechanism.

It belongs to the glycosyltransferase 15 family.

Its subcellular location is the golgi apparatus membrane. The protein operates within protein modification; protein glycosylation. Its function is as follows. Involved in N-linked glycosylation. Transfers an alpha-D-mannosyl residue from GDP-mannose into lipid-linked oligosaccharide, forming an alpha-(1-&gt;2)-D-mannosyl-D-mannose linkage. The protein is Probable mannosyltransferase KTR2 (KTR2) of Saccharomyces cerevisiae (strain ATCC 204508 / S288c) (Baker's yeast).